Consider the following 317-residue polypeptide: (R)-citramalyl-CoA lyase (317 aa).

Residues 4 to 281 (VTIVDVAPRD…PTGIDLSALI (278 aa)) form the Pyruvate carboxyltransferase domain. Arginine 12 lines the substrate pocket. Residues aspartate 13, histidine 214, and histidine 216 each coordinate a divalent metal cation. Residue cysteine 247 is part of the active site. Asparagine 256 is a binding site for a divalent metal cation.

This sequence belongs to the HMG-CoA lyase family. Homodimer. Mn(2+) is required as a cofactor. Co(2+) serves as cofactor. The cofactor is Ni(2+). Requires Mg(2+) as cofactor.

The catalysed reaction is (3R)-citramalyl-CoA = pyruvate + acetyl-CoA. With respect to regulation, activated by dithioerythritol (DTE) (in vitro). Involved in the glyoxylate assimilation cycle used to regenerate acetyl-CoA and produce pyruvate as universal precursor for biosynthesis. Catalyzes the cleavage of (R)-citramalyl-CoA to yield acetyl-CoA and pyruvate. The polypeptide is (R)-citramalyl-CoA lyase (ccl) (Chloroflexus aurantiacus (strain ATCC 29366 / DSM 635 / J-10-fl)).